The chain runs to 529 residues: Basal body-orientation factor 1 (529 aa).

A compositionally biased stretch (basic residues) spans 1-13; sequence MPSKGKDKKKGKS. The segment at 1-22 is disordered; it reads MPSKGKDKKKGKSRGKDTKKLI. Coiled coils occupy residues 55 to 198 and 271 to 361; these read DTSR…LKQE and IKEK…EVER. The disordered stretch occupies residues 510 to 529; that stretch reads GKVVLPTIPKGPQESDTGTF.

The protein belongs to the BBOF1 family. Interacts with MNS1 and ODF2.

The protein localises to the cytoplasm. It localises to the cytoskeleton. The protein resides in the cilium basal body. Its subcellular location is the flagellum axoneme. Functionally, plays an essential role in sperm motility and male fertility by stabilizing the sperm flagellar axonemal structure. May be required for the stability of ODF2 and MANS1 proteins. Dispensable for the assembly and function of motile cilia. This Macaca fascicularis (Crab-eating macaque) protein is Basal body-orientation factor 1.